The sequence spans 151 residues: Putative pre-16S rRNA nuclease (151 aa).

The protein belongs to the YqgF nuclease family.

Its subcellular location is the cytoplasm. In terms of biological role, could be a nuclease involved in processing of the 5'-end of pre-16S rRNA. The protein is Putative pre-16S rRNA nuclease of Aster yellows witches'-broom phytoplasma (strain AYWB).